The primary structure comprises 230 residues: Cytidylate kinase (230 aa).

Residue 12–20 (GPSGAGKGT) coordinates ATP.

This sequence belongs to the cytidylate kinase family. Type 1 subfamily.

The protein localises to the cytoplasm. It carries out the reaction CMP + ATP = CDP + ADP. The enzyme catalyses dCMP + ATP = dCDP + ADP. The polypeptide is Cytidylate kinase (Shewanella loihica (strain ATCC BAA-1088 / PV-4)).